An 82-amino-acid chain; its full sequence is Small ribosomal subunit protein bS18 (82 aa).

A disordered region spans residues 1 to 20; sequence MSEASSAPVRRPFHRRRKTC.

Belongs to the bacterial ribosomal protein bS18 family. In terms of assembly, part of the 30S ribosomal subunit. Forms a tight heterodimer with protein bS6.

Its function is as follows. Binds as a heterodimer with protein bS6 to the central domain of the 16S rRNA, where it helps stabilize the platform of the 30S subunit. This is Small ribosomal subunit protein bS18 from Rhizobium etli (strain CIAT 652).